The sequence spans 379 residues: Alpha-humulene synthase eupE (379 aa).

The protein belongs to the terpene synthase family. Alpha-humulene synthase eupE subfamily. Requires Mg(2+) as cofactor.

It catalyses the reaction (2E,6E)-farnesyl diphosphate = alpha-humulene + diphosphate. Its pathway is secondary metabolite biosynthesis; terpenoid biosynthesis. Its function is as follows. Alpha-humulene synthase; part of the gene cluster that mediates the biosynthesis of eupenifeldin, a bistropolone meroterpenoid that acts as an antitumor agent. The first step of eupenifeldin biosynthesis is the biosynthesis of 3-methylorcinaldehyde performed by the non-reducing polyketide synthase eupA. Oxidative dearomatization of 3-methylorcinaldehyde likely catalyzed by the FAD-dependent monooxygenase eupB is followed by oxidative ring expansion by the 2-oxoglutarate-dependent dioxygenase eupC to provide the first tropolone metabolite, tropolone stipitaldehyde. In parallel, generation of sesquiterpene alpha-humulene from farnesylpyrophosphate (FPP) is catalyzed by the terpene cyclase eupE. The cytochrome P450 monooxygenase eupD then hydroxylates humulene to humulenol. The putative Diels-Alderase eupF probably catalyzes the formation of the tropolone-humulene skeleton by linking humulenol and the polyketide moiety. The short-chain dehydrogenase/reductase eupG and the flavin-dependent monooxygenase eupH are also essential for eupenifeldin biosynthesis and are likely the additional decorating enzymes of the tropolone-humulene skeleton to produce final eupenifeldin or derivatives. The chain is Alpha-humulene synthase eupE from Phoma sp.